We begin with the raw amino-acid sequence, 228 residues long: uncharacterized protein (228 aa).

2 disordered regions span residues 1-62 (MQRP…VGRF) and 160-228 (SPRP…LSGV). Over residues 13–33 (AASTRAPPRPSAPQQGRRQPS) the composition is skewed to low complexity. Residues 167-176 (RGQQVTQDGP) are compositionally biased toward polar residues.

This is an uncharacterized protein from Homo sapiens (Human).